The sequence spans 151 residues: Class I hydrophobin A (151 aa).

A signal peptide spans 1-17 (MQFSVAAVLALATAVAA). Intrachain disulfides connect C52–C125, C60–C119, C61–C101, and C126–C144.

The protein belongs to the fungal hydrophobin family. As to quaternary structure, interacts with cutinase cutL1 in a pH-dependent manner. Self-assembles to form functional amyloid fibrils called rodlets. Self-assembly into fibrillar rodlets occurs spontaneously at hydrophobic:hydrophilic interfaces and the rodlets further associate laterally to form amphipathic monolayers. rolA rodlet formation is regulated by the strength of ionic interactions between rolA molecules. Three types of self-assembled structures of rolA are observed: spherical, rod-like, and mesh-like.

The protein localises to the secreted. It is found in the cell wall. In terms of biological role, aerial growth, conidiation, and dispersal of filamentous fungi in the environment rely upon a capability of their secreting small amphipathic proteins called hydrophobins (HPBs) with low sequence identity. Class I can self-assemble into an outermost layer of rodlet bundles on aerial cell surfaces, conferring cellular hydrophobicity that supports fungal growth, development and dispersal; whereas Class II form highly ordered films at water-air interfaces through intermolecular interactions but contribute nothing to the rodlet structure. RolA is a class I hydrophobin that undergoes a conformational change after its adsorption to hydrophobic surfaces such as the biodegradable polyester polybutylene succinate-coadipate (PBSA) and recruits the cutinase cutL1, resulting in condensation of cutL1 on the PBSA surface and consequent stimulation of PBSA hydrolysis. Increases also the activity of polyethylene terephthalate hydrolase (PETase) that hydrolyzes polyethylene terephthalate (PET), one of the most well-known polyesters that is widely used as packaging material, when the PET samples are preincubated with the hydrophobin. The wetting effect of rolA probably acts on PET surface to become hydrophilic, which leads PETase easier to contact and attack the surface. The polypeptide is Class I hydrophobin A (Aspergillus oryzae (strain ATCC 42149 / RIB 40) (Yellow koji mold)).